The primary structure comprises 377 residues: NIF3-like protein 1 (377 aa).

Residue lysine 109 is modified to N6-acetyllysine. The mediates interaction with COPS2 stretch occupies residues 244 to 377 (LLLYTGMGRL…ETDRDPLHVI (134 aa)). Threonine 255 carries the post-translational modification Phosphothreonine. At serine 259 the chain carries Phosphoserine.

Belongs to the GTP cyclohydrolase I type 2/NIF3 family. In terms of assembly, homodimer. Interacts with COPS2. Interacts with THOC7.

It is found in the cytoplasm. Its subcellular location is the nucleus. Functionally, may function as a transcriptional corepressor through its interaction with COPS2, negatively regulating the expression of genes involved in neuronal differentiation. The chain is NIF3-like protein 1 from Bos taurus (Bovine).